Reading from the N-terminus, the 555-residue chain is Glutamate--tRNA ligase (555 aa).

The 'HIGH' region motif lies at 100-110; the sequence is PNPSGPLHIGH.

The protein belongs to the class-I aminoacyl-tRNA synthetase family. Glutamate--tRNA ligase type 2 subfamily.

It is found in the cytoplasm. The catalysed reaction is tRNA(Glu) + L-glutamate + ATP = L-glutamyl-tRNA(Glu) + AMP + diphosphate. Catalyzes the attachment of glutamate to tRNA(Glu) in a two-step reaction: glutamate is first activated by ATP to form Glu-AMP and then transferred to the acceptor end of tRNA(Glu). This chain is Glutamate--tRNA ligase, found in Methanococcus maripaludis (strain C5 / ATCC BAA-1333).